Consider the following 303-residue polypeptide: NmrA-like family domain-containing oxidoreductase FVEG_08287 (303 aa).

NADP(+) is bound by residues 8–13 (LGAGEL), 8–14 (LGAGELG), 36–39 (LRPS), R37, 56–57 (QG), 77–79 (IFR), and 159–162 (FMSF).

The protein belongs to the NmrA-type oxidoreductase family.

Functionally, nmrA-like family domain-containing oxidoreductase; part of the Fusarium detoxification of benzoxazolinone cluster 1 (FDB1) involved in the degradation of benzoxazolinones produced by the host plant. Maize, wheat, and rye produce the 2 benzoxazinone phytoanticipins 2,4-dihy-droxy-7-methoxy-1,4-benzoxazin-3-one (DIMBOA) and 2,4-dihydroxy-1,4-benzoxazin-3-one (DIBOA) that, due to their inherent instability once released, spontaneously degrade to the more stable corresponding benzoxazolinones, 6-methoxy-2-benzoxazolinone (MBOA) and 2-benzoxazolinone (BOA), respectively. The first step in the detoxification of benzoxazolinones involves the hydrolysis of the cyclic ester bond of benzoxazolinones by the FDB1 cluster gamma-lactamase MBL1 to aminophenols. MBL1 is able to convert BOA into 2-aminophenol (2-AP), as well as MBOA into 5-methoxy-2-aminophenol (2-AMP). The FDB2 cluster N-malonyltransferase FDB2/NAT1 then metabolizes aminophenols via N-malonylation to non-toxic malonamic acids. FDB2/NAT1 converts 2-AP into N-(2-hydroxyphenyl) malonamic acid (HPMA) and 2-AMP into N-(2-hydroxy-4-methoxyphenyl) malonamic acid (HMPMA). The duplicated dienlactone hydrolases DLH1 and DLH2 may provide redundant function for hydrolyzing the lactone moiety in the BOA molecule. The roles of the amidases an other enzymes encoded by the 2 FDB clusters have not been identified so far. The polypeptide is NmrA-like family domain-containing oxidoreductase FVEG_08287 (Gibberella moniliformis (strain M3125 / FGSC 7600) (Maize ear and stalk rot fungus)).